A 264-amino-acid polypeptide reads, in one-letter code: Thiazole synthase (264 aa).

Lys106 serves as the catalytic Schiff-base intermediate with DXP. Residues Gly167, 193–194 (AG), and 215–216 (NS) each bind 1-deoxy-D-xylulose 5-phosphate.

This sequence belongs to the ThiG family. In terms of assembly, homotetramer. Forms heterodimers with either ThiH or ThiS.

Its subcellular location is the cytoplasm. It carries out the reaction [ThiS sulfur-carrier protein]-C-terminal-Gly-aminoethanethioate + 2-iminoacetate + 1-deoxy-D-xylulose 5-phosphate = [ThiS sulfur-carrier protein]-C-terminal Gly-Gly + 2-[(2R,5Z)-2-carboxy-4-methylthiazol-5(2H)-ylidene]ethyl phosphate + 2 H2O + H(+). It functions in the pathway cofactor biosynthesis; thiamine diphosphate biosynthesis. Catalyzes the rearrangement of 1-deoxy-D-xylulose 5-phosphate (DXP) to produce the thiazole phosphate moiety of thiamine. Sulfur is provided by the thiocarboxylate moiety of the carrier protein ThiS. In vitro, sulfur can be provided by H(2)S. The polypeptide is Thiazole synthase (Prochlorococcus marinus (strain MIT 9301)).